A 306-amino-acid chain; its full sequence is Glutathione transport system permease protein GsiC (306 aa).

Topologically, residues M1–R8 are cytoplasmic. Residues L9–L29 traverse the membrane as a helical segment. At L30–T102 the chain is on the periplasmic side. The ABC transmembrane type-1 domain maps to F95–V292. Residues I103–W123 form a helical membrane-spanning segment. The Cytoplasmic portion of the chain corresponds to R124–T134. A helical membrane pass occupies residues L135–F155. The Periplasmic segment spans residues S156–D168. Residues S169 to A189 traverse the membrane as a helical segment. The Cytoplasmic segment spans residues R190–M228. Residues I229–V249 form a helical membrane-spanning segment. Residues E250 to V278 are Periplasmic-facing. Residues L279–I299 form a helical membrane-spanning segment. Residues N300–K306 lie on the Cytoplasmic side of the membrane.

It belongs to the binding-protein-dependent transport system permease family. The complex is composed of two ATP-binding proteins (GsiA), two transmembrane proteins (GsiC and GsiD) and a solute-binding protein (GsiB).

It localises to the cell inner membrane. In terms of biological role, part of the ABC transporter complex GsiABCD involved in glutathione import. Probably responsible for the translocation of the substrate across the membrane. This chain is Glutathione transport system permease protein GsiC, found in Salmonella choleraesuis (strain SC-B67).